The sequence spans 860 residues: Leucine--tRNA ligase (860 aa).

The 'HIGH' region signature appears at 42-52; the sequence is PYPSGRLHMGH. The 'KMSKS' region motif lies at 619-623; it reads KMSKS. Residue Lys-622 participates in ATP binding.

This sequence belongs to the class-I aminoacyl-tRNA synthetase family.

Its subcellular location is the cytoplasm. It carries out the reaction tRNA(Leu) + L-leucine + ATP = L-leucyl-tRNA(Leu) + AMP + diphosphate. The polypeptide is Leucine--tRNA ligase (Pectobacterium carotovorum subsp. carotovorum (strain PC1)).